The sequence spans 701 residues: Aryl hydrocarbon receptor repressor (701 aa).

Residues 25 to 78 enclose the bHLH domain; that stretch reads TMGAEKSNPSKRHRDRLNTELDHLASLLPFSPDIISKLDKLSVLRLSVSYLRVK. The PAS domain maps to 106–176; that stretch reads PVQEGRLLLE…RQLHWAMDPP (71 aa). Over residues 409 to 430 the composition is skewed to polar residues; it reads TEQRSQESTTKLTRQPSKNEPS. The disordered stretch occupies residues 409-432; that stretch reads TEQRSQESTTKLTRQPSKNEPSTC. The tract at residues 555-701 is needed for transcriptional repression; the sequence is ASTTSCLWLG…SKGSDGIFLP (147 aa). Residues Lys583 and Lys660 each participate in a glycyl lysine isopeptide (Lys-Gly) (interchain with G-Cter in SUMO2) cross-link.

As to quaternary structure, interacts with ARNT, ANKRA2, HDAC4 and HDAC5. Interacts with ARNT; forms a heterodimer with ARNT.

The protein localises to the cytoplasm. It localises to the nucleus. Its function is as follows. Mediates dioxin toxicity and is involved in regulation of cell growth and differentiation. Represses the transcription activity of AHR by competing with this transcription factor for heterodimer formation with the ARNT and subsequently binding to the xenobiotic response element (XRE) sequence present in the promoter regulatory region of variety of genes. Represses CYP1A1 by binding the XRE sequence and recruiting ANKRA2, HDAC4 and/or HDAC5. Autoregulates its expression by associating with its own XRE site. This Mus musculus (Mouse) protein is Aryl hydrocarbon receptor repressor (Ahrr).